The chain runs to 72 residues: Small ribosomal subunit protein bS20 (72 aa).

Belongs to the bacterial ribosomal protein bS20 family.

Binds directly to 16S ribosomal RNA. The polypeptide is Small ribosomal subunit protein bS20 (rpsT) (Aeromonas hydrophila).